Consider the following 137-residue polypeptide: Large ribosomal subunit protein uL13 (137 aa).

R55 carries the post-translational modification Citrulline. S73 is subject to Phosphoserine. R136 bears the Citrulline mark.

It belongs to the universal ribosomal protein uL13 family. Component of the 60S ribosome. Component of the GAIT complex. Interacts with EIF4G1. Post-translationally, phosphorylation at Ser-73 upon interferon-gamma treatment in macrophages involves a DAPK1-DAPK3 kinase cascade and is causing release from the ribosome, association with the GAIT complex and subsequent involvement in transcript-selective translation inhibition. Citrullinated by PADI4.

The protein resides in the cytoplasm. In terms of biological role, associated with ribosomes but is not required for canonical ribosome function and has extra-ribosomal functions. Component of the GAIT (gamma interferon-activated inhibitor of translation) complex which mediates interferon-gamma-induced transcript-selective translation inhibition in inflammation processes. Upon interferon-gamma activation and subsequent phosphorylation dissociates from the ribosome and assembles into the GAIT complex which binds to stem loop-containing GAIT elements in the 3'-UTR of diverse inflammatory mRNAs (such as ceruplasmin) and suppresses their translation. In the GAIT complex interacts with m7G cap-bound eIF4G at or near the eIF3-binding site and blocks the recruitment of the 43S ribosomal complex. Involved in methylation of rRNA. This chain is Large ribosomal subunit protein uL13 (RPL13A), found in Sus scrofa (Pig).